Reading from the N-terminus, the 1008-residue chain is Envelopment polyprotein (1008 aa).

The first 17 residues, 1 to 17, serve as a signal peptide directing secretion; the sequence is MVRTYLLLLLLCGPATP. Residues 18–394 lie on the Lumenal side of the membrane; the sequence is FFNHLMDVTR…NWANIHCFSK (377 aa). N-linked (GlcNAc...) asparagine; by host glycosylation is found at Asn34, Asn70, and Asn108. Intrachain disulfides connect Cys138–Cys269, Cys156–Cys166, Cys206–Cys247, Cys216–Cys226, Cys233–Cys238, Cys292–Cys295, Cys299–Cys368, and Cys319–Cys324. Asn208 carries an N-linked (GlcNAc...) asparagine; by host glycan. The helical transmembrane segment at 395–415 threads the bilayer; sequence EQVLILVAVSSLCILLLASVL. Residues 416-496 lie on the Cytoplasmic side of the membrane; that stretch reads RALKVIATFT…VRQKMFNLTR (81 aa). The interval 419-465 is golgi retention signal; sequence KVIATFTWKIIKPFWWILSLLCRTCSKRLNKRAERLKESIHSLEEGL. Residues 461-465 form an important for correct targeting of the glycoproteins to the Golgi complex but not for heterodimerization region; the sequence is LEEGL. The interval 497–513 is internal signal sequence for glycoprotein C; sequence LSPVVVGMLCLACPVES. 12 cysteine pairs are disulfide-bonded: Cys514–Cys555, Cys527–Cys537, Cys580–Cys677, Cys595–Cys789, Cys601–Cys650, Cys607–Cys657, Cys612–Cys639, Cys643–Cys648, Cys728–Cys742, Cys758–Cys771, Cys851–Cys924, and Cys861–Cys864. At 514–977 the chain is on the lumenal side; it reads CSDSISVTAS…GWFKASWLRA (464 aa). A fusion loop region spans residues 601 to 607; it reads CHLMGAC. The segment at 644–655 is fusion loop; it reads GGALCQCFNMRP. 2 N-linked (GlcNAc...) asparagine; by host glycosylation sites follow: Asn691 and Asn696. 2 N-linked (GlcNAc...) asparagine; by host glycosylation sites follow: Asn912 and Asn949. The helical transmembrane segment at 978-998 threads the bilayer; that stretch reads IWAILGGTVSLIIGVVIIYMV. Residues 999 to 1008 lie on the Cytoplasmic side of the membrane; the sequence is FTLCLKVKKS.

Belongs to the phlebovirus envelope glycoprotein family. In terms of assembly, homodimer. Heterodimer with glycoprotein C. Homotrimer (postfusion). As to quaternary structure, heterodimer with glycoprotein N. Homotrimer (postfusion). Post-translationally, specific enzymatic cleavages in vivo yield mature proteins including glycoprotein C and glycoprotein N. In terms of processing, the cytoplasmic tail is Palmitoylated. Glycosylated. Contains principally poly-N-acetyllactosamine glycans. Post-translationally, glycosylated. Contains principally oligomannose-type glycans that can attach to host CD209/DC-SIGN. In terms of processing, palmitoylated.

Its subcellular location is the virion membrane. It is found in the host Golgi apparatus membrane. The protein resides in the host endoplasmic reticulum membrane. In terms of biological role, structural component of the virion that interacts with glycoprotein C. It shields the hydrophobic fusion loops of the glycoprotein C, preventing premature fusion. The glycoprotein protrusions are arranged on an icosahedral lattice, with T=12 triangulation. They are able to attach the virion to the host cell receptor CD209/DC-SIGN and to promote fusion of membranes with the late endosome after endocytosis of the virion. Plays a role in the packaging of ribonucleoproteins during virus assembly. Its function is as follows. Structural component of the virion that interacts with glycoprotein N. Acts as a class II fusion protein that is activated upon acidification and subsequent repositioning of the glycoprotein N. The glycoprotein protrusions are arranged on an icosahedral lattice, with T=12 triangulation. They are able to attach the virion to the host cell receptor CD209/DC-SIGN and to promote fusion of membranes with the late endosome after endocytosis of the virion. The sequence is that of Envelopment polyprotein (GP) from Homo sapiens (Human).